A 469-amino-acid polypeptide reads, in one-letter code: Calcium-binding mitochondrial carrier protein SCaMC-2-B (469 aa).

The Mitochondrial intermembrane portion of the chain corresponds to 1 to 189; it reads MLCLCLYVPV…EKNTGMWWRH (189 aa). 3 consecutive EF-hand domains span residues 47-80, 78-113, and 114-149; these read SYRK…RDHE, DHEK…LGVH, and ISEE…HPAE. The Ca(2+) site is built by Asp60, Asp62, Asp64, Gln66, and Glu71. 3 Solcar repeats span residues 184 to 270, 278 to 363, and 375 to 463; these read GMWW…IKRL, LGIL…LKNS, and PGVF…LKIT. A helical membrane pass occupies residues 190–207; that stretch reads LVAGGGAGAVSRTCTAPL. Residues 208 to 244 lie on the Mitochondrial matrix side of the membrane; the sequence is DRLKVLMQVHATRSNSMGIAGGFTQMIREGGLRSLWR. Residues 245 to 264 traverse the membrane as a helical segment; sequence GNGINVLKIAPESAIKFMAY. The Mitochondrial intermembrane segment spans residues 265 to 287; the sequence is EQIKRLIGSNQETLGILERLVSG. The chain crosses the membrane as a helical span at residues 288–301; it reads SLAGAIAQSSIYPM. The Mitochondrial matrix segment spans residues 302–337; it reads EVLKTRLALGRTGQYSGIADCAKHIFKKEGMTAFYK. The chain crosses the membrane as a helical span at residues 338 to 357; that stretch reads GYIPNMLGIIPYAGIDLAVY. At 358 to 380 the chain is on the mitochondrial intermembrane side; that stretch reads ETLKNSWLQRFATDSADPGVFVL. The chain crosses the membrane as a helical span at residues 381 to 398; that stretch reads LACGTMSSTCGQLASYPL. The Mitochondrial matrix portion of the chain corresponds to 399 to 437; it reads ALVRTRMQAQASQEGSPQMTMSGLFRHIVRTEGAIGLYR. The helical transmembrane segment at 438 to 457 threads the bilayer; it reads GLAPNFMKVIPAVSISYVVY. Over 458-469 the chain is Mitochondrial intermembrane; that stretch reads ENLKITLGVQSR.

The protein belongs to the mitochondrial carrier (TC 2.A.29) family.

It is found in the mitochondrion inner membrane. Its function is as follows. Calcium-dependent mitochondrial solute carrier. This is Calcium-binding mitochondrial carrier protein SCaMC-2-B (slc25a25b) from Danio rerio (Zebrafish).